We begin with the raw amino-acid sequence, 907 residues long: Protein translocase subunit SecA (907 aa).

Residues Gln87, 105-109, and Asp512 each bind ATP; that span reads GEGKT. The tract at residues 870–897 is disordered; that stretch reads AALAATQPQVREGEKVGRNDPCPCGSGK. Zn(2+) is bound by residues Cys891, Cys893, Cys902, and His903.

The protein belongs to the SecA family. As to quaternary structure, monomer and homodimer. Part of the essential Sec protein translocation apparatus which comprises SecA, SecYEG and auxiliary proteins SecDF-YajC and YidC. Zn(2+) serves as cofactor.

Its subcellular location is the cell inner membrane. The protein localises to the cytoplasm. It carries out the reaction ATP + H2O + cellular proteinSide 1 = ADP + phosphate + cellular proteinSide 2.. In terms of biological role, part of the Sec protein translocase complex. Interacts with the SecYEG preprotein conducting channel. Has a central role in coupling the hydrolysis of ATP to the transfer of proteins into and across the cell membrane, serving both as a receptor for the preprotein-SecB complex and as an ATP-driven molecular motor driving the stepwise translocation of polypeptide chains across the membrane. This Shewanella piezotolerans (strain WP3 / JCM 13877) protein is Protein translocase subunit SecA.